The primary structure comprises 849 residues: Probable ATP-dependent RNA helicase ddx20 (849 aa).

Residues 9–39 (FSNPMNSNSSNNIENNNNSNNNNNNFKNNFK) form a disordered region. A Q motif motif is present at residues 55–83 (ITFSELLLQKEVLKGLEDGGYQRPSPIQL). ATP is bound by residues arginine 77, glutamine 82, 99–106 (AKSGTGKT), and 102–107 (GTGKTI). The Helicase ATP-binding domain occupies 86 to 319 (IPLGISGVDL…KLYMNNENLV (234 aa)). The DEAD box signature appears at 255–258 (DEAD). One can recognise a Helicase C-terminal domain in the interval 355-499 (KCKSLVLVLE…QIENENENEN (145 aa)). 4 disordered regions span residues 480-504 (QQQQ…NNNE), 572-644 (INEN…ENDN), 667-737 (SNNN…YPHY), and 761-817 (NNYN…NNPY). Acidic residues-rich tracts occupy residues 583–595 (NEDE…EDDY), 604–615 (EDEEEEQEEDDY), and 624–644 (EEEE…ENDN). 2 stretches are compositionally biased toward low complexity: residues 667–687 (SNNN…NNHY) and 696–720 (KNSI…SQSN).

This sequence belongs to the DEAD box helicase family. DDX20 subfamily. In terms of assembly, part of the core SMN complex.

The protein resides in the cytoplasm. It localises to the nucleus. It carries out the reaction ATP + H2O = ADP + phosphate + H(+). Functionally, the SMN complex catalyzes the assembly of small nuclear ribonucleoproteins (snRNPs), the building blocks of the spliceosome, and thereby plays an important role in the splicing of cellular pre-mRNAs. Most spliceosomal snRNPs contain a common set of Sm proteins SNRPB, SNRPD1, SNRPD2, SNRPD3, SNRPE, SNRPF and SNRPG that assemble in a heptameric protein ring on the Sm site of the small nuclear RNA to form the core snRNP (Sm core). In the cytosol, the Sm proteins SNRPD1, SNRPD2, SNRPE, SNRPF and SNRPG are trapped in an inactive 6S pICln-Sm complex by the chaperone CLNS1A that controls the assembly of the core snRNP. To assemble core snRNPs, the SMN complex accepts the trapped 5Sm proteins from CLNS1A forming an intermediate. Binding of snRNA inside 5Sm triggers eviction of the SMN complex, thereby allowing binding of SNRPD3 and SNRPB to complete assembly of the core snRNP. May also play a role in the metabolism of small nucleolar ribonucleoprotein (snoRNPs). This chain is Probable ATP-dependent RNA helicase ddx20 (ddx20), found in Dictyostelium discoideum (Social amoeba).